Consider the following 192-residue polypeptide: Guanylate kinase (192 aa).

In terms of domain architecture, Guanylate kinase-like spans 7-185; sequence GLIIILSSPS…TLKKIHEIIV (179 aa). 14–21 is a binding site for ATP; it reads SPSGTGKS.

It belongs to the guanylate kinase family.

The protein resides in the cytoplasm. It catalyses the reaction GMP + ATP = GDP + ADP. In terms of biological role, essential for recycling GMP and indirectly, cGMP. The sequence is that of Guanylate kinase from Rickettsia felis (strain ATCC VR-1525 / URRWXCal2) (Rickettsia azadi).